A 300-amino-acid chain; its full sequence is Ribosomal protein L11 methyltransferase (300 aa).

4 residues coordinate S-adenosyl-L-methionine: Thr-152, Gly-173, Asp-195, and Asn-234.

This sequence belongs to the methyltransferase superfamily. PrmA family.

The protein resides in the cytoplasm. The enzyme catalyses L-lysyl-[protein] + 3 S-adenosyl-L-methionine = N(6),N(6),N(6)-trimethyl-L-lysyl-[protein] + 3 S-adenosyl-L-homocysteine + 3 H(+). In terms of biological role, methylates ribosomal protein L11. This Burkholderia pseudomallei (strain K96243) protein is Ribosomal protein L11 methyltransferase.